The primary structure comprises 169 residues: Shikimate kinase (169 aa).

An ATP-binding site is contributed by 13 to 18 (GAGKST). Residue S17 participates in Mg(2+) binding. Residues D35, R59, and G80 each contribute to the substrate site. ATP is bound at residue R117. Position 136 (R136) interacts with substrate. Residue R153 participates in ATP binding.

This sequence belongs to the shikimate kinase family. Monomer. The cofactor is Mg(2+).

It localises to the cytoplasm. It catalyses the reaction shikimate + ATP = 3-phosphoshikimate + ADP + H(+). Its pathway is metabolic intermediate biosynthesis; chorismate biosynthesis; chorismate from D-erythrose 4-phosphate and phosphoenolpyruvate: step 5/7. Catalyzes the specific phosphorylation of the 3-hydroxyl group of shikimic acid using ATP as a cosubstrate. The polypeptide is Shikimate kinase (Corynebacterium glutamicum (strain ATCC 13032 / DSM 20300 / JCM 1318 / BCRC 11384 / CCUG 27702 / LMG 3730 / NBRC 12168 / NCIMB 10025 / NRRL B-2784 / 534)).